Reading from the N-terminus, the 372-residue chain is 4-hydroxy-3-methylbut-2-en-1-yl diphosphate synthase (flavodoxin) (372 aa).

Residues cysteine 270, cysteine 273, cysteine 305, and glutamate 312 each contribute to the [4Fe-4S] cluster site.

It belongs to the IspG family. Requires [4Fe-4S] cluster as cofactor.

The catalysed reaction is (2E)-4-hydroxy-3-methylbut-2-enyl diphosphate + oxidized [flavodoxin] + H2O + 2 H(+) = 2-C-methyl-D-erythritol 2,4-cyclic diphosphate + reduced [flavodoxin]. The protein operates within isoprenoid biosynthesis; isopentenyl diphosphate biosynthesis via DXP pathway; isopentenyl diphosphate from 1-deoxy-D-xylulose 5-phosphate: step 5/6. Converts 2C-methyl-D-erythritol 2,4-cyclodiphosphate (ME-2,4cPP) into 1-hydroxy-2-methyl-2-(E)-butenyl 4-diphosphate. The sequence is that of 4-hydroxy-3-methylbut-2-en-1-yl diphosphate synthase (flavodoxin) from Pseudoalteromonas translucida (strain TAC 125).